The following is a 137-amino-acid chain: Small ribosomal subunit protein uS8 (137 aa).

Belongs to the universal ribosomal protein uS8 family. Part of the 30S ribosomal subunit. Contacts proteins S5 and S12.

One of the primary rRNA binding proteins, it binds directly to 16S rRNA central domain where it helps coordinate assembly of the platform of the 30S subunit. In Metamycoplasma arthritidis (strain 158L3-1) (Mycoplasma arthritidis), this protein is Small ribosomal subunit protein uS8.